Here is a 185-residue protein sequence, read N- to C-terminus: Elongation factor P (185 aa).

It belongs to the elongation factor P family.

It is found in the cytoplasm. It participates in protein biosynthesis; polypeptide chain elongation. In terms of biological role, involved in peptide bond synthesis. Stimulates efficient translation and peptide-bond synthesis on native or reconstituted 70S ribosomes in vitro. Probably functions indirectly by altering the affinity of the ribosome for aminoacyl-tRNA, thus increasing their reactivity as acceptors for peptidyl transferase. This Caldicellulosiruptor saccharolyticus (strain ATCC 43494 / DSM 8903 / Tp8T 6331) protein is Elongation factor P.